A 430-amino-acid polypeptide reads, in one-letter code: Adenylosuccinate synthetase (430 aa).

Residues 13–19 and 41–43 each bind GTP; these read GDEGKGK and GHT. Asp-14 serves as the catalytic Proton acceptor. Asp-14 and Gly-41 together coordinate Mg(2+). IMP is bound by residues 14–17, 39–42, Thr-130, Arg-144, Gln-225, Thr-240, and Arg-304; these read DEGK and NAGH. Catalysis depends on His-42, which acts as the Proton donor. Substrate is bound at residue 300-306; it reads ATTGRAR. GTP-binding positions include Arg-306, 332-334, and 414-416; these read KLD and STG.

The protein belongs to the adenylosuccinate synthetase family. As to quaternary structure, homodimer. Mg(2+) serves as cofactor.

Its subcellular location is the cytoplasm. The enzyme catalyses IMP + L-aspartate + GTP = N(6)-(1,2-dicarboxyethyl)-AMP + GDP + phosphate + 2 H(+). It functions in the pathway purine metabolism; AMP biosynthesis via de novo pathway; AMP from IMP: step 1/2. Plays an important role in the de novo pathway of purine nucleotide biosynthesis. Catalyzes the first committed step in the biosynthesis of AMP from IMP. This Pseudomonas syringae pv. syringae (strain B728a) protein is Adenylosuccinate synthetase.